The following is a 105-amino-acid chain: Mitomycin resistance protein McrB (105 aa).

Functionally, involved in mitomycin resistance. May operate with McrA or may be a type of transcriptional activator protein. In Streptomyces lavendulae, this protein is Mitomycin resistance protein McrB (mcrB).